The chain runs to 81 residues: Trefoil factor 3 (81 aa).

Positions 1 to 22 (METRAFWTTLLLVLVAGSSCKA) are cleaved as a signal peptide. In terms of domain architecture, P-type spans 31 to 74 (SQCMVPANVRVDCGYPTVTSEQCNNRGCCFDSSIPNVPWCFKPL). 3 cysteine pairs are disulfide-bonded: Cys33–Cys59, Cys43–Cys58, and Cys53–Cys70.

As to quaternary structure, monomer. Homodimer; disulfide-linked. In terms of tissue distribution, expressed in goblet cells of the intestines, and colon, in paraventricular hypothalamus and supraoptic nuclei. Weakly expressed in gastric epithelial cells (at protein level). Expressed by goblet cells of small and large intestinal epithelia, kidney and stomach. Expressed in the paraventricular hypothalamus, arcuate nucleus and amygdala of the brain. Weakly expressed in gastric epithelial cells.

The protein localises to the secreted. It localises to the extracellular space. Its subcellular location is the extracellular matrix. It is found in the cytoplasm. Involved in the maintenance and repair of the intestinal mucosa. Promotes the mobility of epithelial cells in healing processes (motogen). The polypeptide is Trefoil factor 3 (Tff3) (Rattus norvegicus (Rat)).